A 214-amino-acid chain; its full sequence is Probable nicotinate-nucleotide adenylyltransferase (214 aa).

It belongs to the NadD family.

It catalyses the reaction nicotinate beta-D-ribonucleotide + ATP + H(+) = deamido-NAD(+) + diphosphate. The protein operates within cofactor biosynthesis; NAD(+) biosynthesis; deamido-NAD(+) from nicotinate D-ribonucleotide: step 1/1. Catalyzes the reversible adenylation of nicotinate mononucleotide (NaMN) to nicotinic acid adenine dinucleotide (NaAD). This chain is Probable nicotinate-nucleotide adenylyltransferase, found in Buchnera aphidicola subsp. Acyrthosiphon pisum (strain Tuc7).